The sequence spans 570 residues: Dihydroxy-acid dehydratase (570 aa).

Cysteine 61 lines the [2Fe-2S] cluster pocket. Aspartate 94 contributes to the Mg(2+) binding site. [2Fe-2S] cluster is bound at residue cysteine 135. Positions 136 and 137 each coordinate Mg(2+). Lysine 137 bears the N6-carboxylysine mark. Cysteine 207 is a [2Fe-2S] cluster binding site. Glutamate 459 is a Mg(2+) binding site. Serine 485 (proton acceptor) is an active-site residue.

This sequence belongs to the IlvD/Edd family. As to quaternary structure, homodimer. Requires [2Fe-2S] cluster as cofactor. The cofactor is Mg(2+).

The catalysed reaction is (2R)-2,3-dihydroxy-3-methylbutanoate = 3-methyl-2-oxobutanoate + H2O. It carries out the reaction (2R,3R)-2,3-dihydroxy-3-methylpentanoate = (S)-3-methyl-2-oxopentanoate + H2O. Its pathway is amino-acid biosynthesis; L-isoleucine biosynthesis; L-isoleucine from 2-oxobutanoate: step 3/4. It participates in amino-acid biosynthesis; L-valine biosynthesis; L-valine from pyruvate: step 3/4. In terms of biological role, functions in the biosynthesis of branched-chain amino acids. Catalyzes the dehydration of (2R,3R)-2,3-dihydroxy-3-methylpentanoate (2,3-dihydroxy-3-methylvalerate) into 2-oxo-3-methylpentanoate (2-oxo-3-methylvalerate) and of (2R)-2,3-dihydroxy-3-methylbutanoate (2,3-dihydroxyisovalerate) into 2-oxo-3-methylbutanoate (2-oxoisovalerate), the penultimate precursor to L-isoleucine and L-valine, respectively. This Lactococcus lactis subsp. lactis (strain IL1403) (Streptococcus lactis) protein is Dihydroxy-acid dehydratase.